Reading from the N-terminus, the 75-residue chain is DNA-directed RNA polymerase subunit omega (75 aa).

This sequence belongs to the RNA polymerase subunit omega family. In terms of assembly, in cyanobacteria the RNAP catalytic core is composed of 2 alpha, 1 beta, 1 beta', 1 gamma and 1 omega subunit. When a sigma factor is associated with the core the holoenzyme is formed, which can initiate transcription.

It catalyses the reaction RNA(n) + a ribonucleoside 5'-triphosphate = RNA(n+1) + diphosphate. In terms of biological role, promotes RNA polymerase assembly. Latches the N- and C-terminal regions of the beta' subunit thereby facilitating its interaction with the beta and alpha subunits. The protein is DNA-directed RNA polymerase subunit omega of Prochlorococcus marinus (strain MIT 9211).